The sequence spans 162 residues: Cyclic pyranopterin monophosphate synthase (162 aa).

Residues 75 to 77 (LCH) and 113 to 114 (ME) contribute to the substrate site. Residue Asp-128 is part of the active site.

The protein belongs to the MoaC family. In terms of assembly, homohexamer; trimer of dimers.

The catalysed reaction is (8S)-3',8-cyclo-7,8-dihydroguanosine 5'-triphosphate = cyclic pyranopterin phosphate + diphosphate. The protein operates within cofactor biosynthesis; molybdopterin biosynthesis. Functionally, catalyzes the conversion of (8S)-3',8-cyclo-7,8-dihydroguanosine 5'-triphosphate to cyclic pyranopterin monophosphate (cPMP). The polypeptide is Cyclic pyranopterin monophosphate synthase (Burkholderia cenocepacia (strain ATCC BAA-245 / DSM 16553 / LMG 16656 / NCTC 13227 / J2315 / CF5610) (Burkholderia cepacia (strain J2315))).